Consider the following 305-residue polypeptide: Glycine--tRNA ligase alpha subunit (305 aa).

The protein belongs to the class-II aminoacyl-tRNA synthetase family. In terms of assembly, tetramer of two alpha and two beta subunits.

Its subcellular location is the cytoplasm. The catalysed reaction is tRNA(Gly) + glycine + ATP = glycyl-tRNA(Gly) + AMP + diphosphate. This chain is Glycine--tRNA ligase alpha subunit, found in Janthinobacterium sp. (strain Marseille) (Minibacterium massiliensis).